The primary structure comprises 126 residues: uncharacterized protein (126 aa).

The 99-residue stretch at 8-106 (ISVEATLEVI…WGANHINRVY (99 aa)) folds into the HTH hxlR-type domain.

This is an uncharacterized protein from Bacillus subtilis (strain 168).